A 312-amino-acid polypeptide reads, in one-letter code: Ribosomal RNA small subunit methyltransferase H (312 aa).

S-adenosyl-L-methionine is bound by residues 32-34, Asp-52, Phe-79, Asp-100, and Gln-107; that span reads AGH.

It belongs to the methyltransferase superfamily. RsmH family.

The protein resides in the cytoplasm. The catalysed reaction is cytidine(1402) in 16S rRNA + S-adenosyl-L-methionine = N(4)-methylcytidine(1402) in 16S rRNA + S-adenosyl-L-homocysteine + H(+). In terms of biological role, specifically methylates the N4 position of cytidine in position 1402 (C1402) of 16S rRNA. The protein is Ribosomal RNA small subunit methyltransferase H of Listeria monocytogenes serotype 4b (strain F2365).